The sequence spans 425 residues: Phosphoribosylamine--glycine ligase (425 aa).

Positions 107–312 (KDLCARYNIP…LLVLLNAAVD (206 aa)) constitute an ATP-grasp domain. 133-193 (VDQTGAPIVI…EEFMTGEEAS (61 aa)) contributes to the ATP binding site. Residues 214 to 233 (RVGDGDVGPNTGGMGAYSPA) are disordered. 2 residues coordinate Mg(2+): Glu-282 and Asn-284.

This sequence belongs to the GARS family. Requires Mg(2+) as cofactor. The cofactor is Mn(2+).

It catalyses the reaction 5-phospho-beta-D-ribosylamine + glycine + ATP = N(1)-(5-phospho-beta-D-ribosyl)glycinamide + ADP + phosphate + H(+). It functions in the pathway purine metabolism; IMP biosynthesis via de novo pathway; N(1)-(5-phospho-D-ribosyl)glycinamide from 5-phospho-alpha-D-ribose 1-diphosphate: step 2/2. This is Phosphoribosylamine--glycine ligase from Mesorhizobium japonicum (strain LMG 29417 / CECT 9101 / MAFF 303099) (Mesorhizobium loti (strain MAFF 303099)).